A 568-amino-acid chain; its full sequence is Sentrin-specific protease 3 (568 aa).

A disordered region spans residues 1-119 (MKETIQGTGS…PSHRKTCSQR (119 aa)). Phosphoserine is present on residues serine 52, serine 71, and serine 73. The span at 72–87 (ASEEEEEEEEEDEEEV) shows a compositional bias: acidic residues. Over residues 106–119 (RALRPSHRKTCSQR) the composition is skewed to basic residues. 2 consecutive short sequence motifs (nuclear localization signal) follow at residues 119–122 (RRRR) and 147–153 (RHRGRRR). Residues 155–174 (LAHPKNHLSPQEGGATPQVP) are disordered. Serine 163 carries the post-translational modification Phosphoserine. At threonine 170 the chain carries Phosphothreonine. A phosphoserine mark is found at serine 175, serine 182, serine 206, and serine 226. Residues 380 to 537 (HVLTMDDLGT…AFVLQYCKHL (158 aa)) are protease. Active-site residues include histidine 459 and aspartate 476. Cysteine 526 serves as the catalytic Nucleophile.

This sequence belongs to the peptidase C48 family. Component of some MLL1/MLL complex, at least composed of the core components KMT2A/MLL1, ASH2L, HCFC1/HCF1, WDR5 and RBBP5, as well as the facultative components BACC1, CHD8, E2F6, HSP70, INO80C, KANSL1, LAS1L, MAX, MCRS1, MGA, MYST1/MOF, PELP1, PHF20, PRP31, RING2, RUVB1/TIP49A, RUVB2/TIP49B, SENP3, TAF1, TAF4, TAF6, TAF7, TAF9 and TEX10. Interacts with EP300, NPM1 and CDCA8. Component of the 5FMC complex, at least composed of PELP1, LAS1L, TEX10, WDR18 and SENP3; the complex interacts with methylated CHTOP and ZNF148. Interacts with NOL9. Interacts with CCAR2.

It localises to the nucleus. The protein resides in the nucleolus. It is found in the nucleoplasm. The protein localises to the cytoplasm. Its activity is regulated as follows. On oxidative stress, SENP3 degradation is blocked by inhibition of its ubiquitination, which stabilizes it as it accumulates in the nucleoplasm. In terms of biological role, protease that releases SUMO2 and SUMO3 monomers from sumoylated substrates, but has only weak activity against SUMO1 conjugates. Deconjugates SUMO2 from MEF2D, which increases its transcriptional activation capability. Deconjugates SUMO2 and SUMO3 from CDCA8. Redox sensor that, when redistributed into nucleoplasm, can act as an effector to enhance HIF1A transcriptional activity by desumoylating EP300. Required for rRNA processing through deconjugation of SUMO2 and SUMO3 from nucleophosmin, NPM1. Plays a role in the regulation of sumoylation status of ZNF148. Functions as a component of the Five Friends of Methylated CHTOP (5FMC) complex; the 5FMC complex is recruited to ZNF148 by methylated CHTOP, leading to desumoylation of ZNF148 and subsequent transactivation of ZNF148 target genes. Deconjugates SUMO2 from KAT5. Catalyzes desumoylation of MRE11. The polypeptide is Sentrin-specific protease 3 (Senp3) (Mus musculus (Mouse)).